We begin with the raw amino-acid sequence, 334 residues long: N-chimaerin (334 aa).

Over residues 1-10 the composition is skewed to polar residues; that stretch reads MPSKESWSGR. The interval 1–22 is disordered; sequence MPSKESWSGRKTNRATVHKSKQ. Position 67 is a phosphothreonine (T67). Residues 80-130 form a Phorbol-ester/DAG-type zinc finger; the sequence is VHNFKVHTFRGPHWCEYCANFMWGLIAQGVKCADCGLNVHKQCSKMVPNDC. In terms of domain architecture, Rho-GAP spans 143–334; it reads CDLTTLVKAR…LLIKNEDILF (192 aa). Phosphothreonine is present on T215.

In terms of assembly, interacts with EPHA4; effector of EPHA4 in axon guidance linking EPHA4 activation to RAC1 regulation. In terms of processing, phosphorylated. Phosphorylation is EPHA4 kinase activity-dependent.

Its function is as follows. GTPase-activating protein for p21-rac and a phorbol ester receptor. Involved in the assembly of neuronal locomotor circuits as a direct effector of EPHA4 in axon guidance. The protein is N-chimaerin (CHN1) of Bos taurus (Bovine).